The sequence spans 207 residues: Cytochrome c biogenesis ATP-binding export protein CcmA (207 aa).

Positions 4–207 (LEARELLCER…RISLTQTGAA (204 aa)) constitute an ABC transporter domain. 36 to 43 (GSNGAGKT) is an ATP binding site.

Belongs to the ABC transporter superfamily. CcmA exporter (TC 3.A.1.107) family. The complex is composed of two ATP-binding proteins (CcmA) and two transmembrane proteins (CcmB).

It localises to the cell inner membrane. The catalysed reaction is heme b(in) + ATP + H2O = heme b(out) + ADP + phosphate + H(+). Its function is as follows. Part of the ABC transporter complex CcmAB involved in the biogenesis of c-type cytochromes; once thought to export heme, this seems not to be the case, but its exact role is uncertain. Responsible for energy coupling to the transport system. The sequence is that of Cytochrome c biogenesis ATP-binding export protein CcmA from Escherichia coli O6:H1 (strain CFT073 / ATCC 700928 / UPEC).